The following is a 996-amino-acid chain: KK-1 biosynthesis cluster protein D (996 aa).

Disordered stretches follow at residues 307–333, 425–449, 489–556, and 571–602; these read HDTD…PELD, EQDN…ARDL, AGVA…ALRA, and STHS…SLHS. Polar residues-rich tracts occupy residues 318–329 and 428–439; these read PIRSNKLSQSKQ and NQTNEEGTGEVQ. 2 stretches are compositionally biased toward basic and acidic residues: residues 440–449 and 500–527; these read SQRDRRARDL and RAAE…DKAA. The span at 572 to 590 shows a compositional bias: polar residues; sequence THSIHQRASVNTTAPTVAR.

It participates in secondary metabolite biosynthesis. Its function is as follows. Part of the gene cluster that mediates the biosynthesis of KK-1, a novel cyclic depsipeptide with 10 residues which is a promising active compound with high activity against many plant pathogens, especially Botrytis cinerea. The role of kk1D in KK-1 biosynthesis has still to be determined. The nonribosomal peptide synthetase (NRPS) kk1B catalyzes the elongation and cyclization of the decapeptide chain composed of 1 D-lactic acid residue (D-Lac), 1 pipecolic acid residue (Pip), 1 aspartic acid residue (Asp), 1 isoleucine residue (Ile), 1 glycine residue (Gly), 1 tyrosine residue (Tyr) and 4 valine residues (Val). The Asp, Ile and 3 Val residues are N-methylated by the 5 methyltransferase domains from the NRPS (found in modules 3, 5, 6, 7 and 9), whereas the Tyr residue is O-methylated by the cluster encoded O-methyltransferase kk1A. The thioesterase kk1J is likely to be involved in the corrective mechanism of peptide chain synthesis. The D-lactate dehydrogenase kk1H is involved in the synthesis of D-lactic acid from pyruvic acid, which is recognized by the A domain of the first kk1B module. The pyrroline-5-carboxylate reductase kk1I is involved in the synthesis of the L-pipecolic acid residue of KK-1 from delta-1-pyrroline-5-carboxylate (P5C), a metabolic intermediate of lysine. It is still unclear how kk1C and kk1D are involved in the production of KK-1. This is KK-1 biosynthesis cluster protein D from Curvularia clavata.